The sequence spans 328 residues: D-cysteine desulfhydrase (328 aa).

Lys51 bears the N6-(pyridoxal phosphate)lysine mark.

This sequence belongs to the ACC deaminase/D-cysteine desulfhydrase family. As to quaternary structure, homodimer. Requires pyridoxal 5'-phosphate as cofactor.

It carries out the reaction D-cysteine + H2O = hydrogen sulfide + pyruvate + NH4(+) + H(+). In terms of biological role, catalyzes the alpha,beta-elimination reaction of D-cysteine and of several D-cysteine derivatives. It could be a defense mechanism against D-cysteine. This Salmonella typhi protein is D-cysteine desulfhydrase.